Here is a 400-residue protein sequence, read N- to C-terminus: Nicotinate phosphoribosyltransferase (400 aa).

The residue at position 220 (histidine 220) is a Phosphohistidine; by autocatalysis.

The protein belongs to the NAPRTase family. Transiently phosphorylated on a His residue during the reaction cycle. Phosphorylation strongly increases the affinity for substrates and increases the rate of nicotinate D-ribonucleotide production. Dephosphorylation regenerates the low-affinity form of the enzyme, leading to product release.

The enzyme catalyses nicotinate + 5-phospho-alpha-D-ribose 1-diphosphate + ATP + H2O = nicotinate beta-D-ribonucleotide + ADP + phosphate + diphosphate. Its pathway is cofactor biosynthesis; NAD(+) biosynthesis; nicotinate D-ribonucleotide from nicotinate: step 1/1. In terms of biological role, catalyzes the synthesis of beta-nicotinate D-ribonucleotide from nicotinate and 5-phospho-D-ribose 1-phosphate at the expense of ATP. The protein is Nicotinate phosphoribosyltransferase of Shigella sonnei (strain Ss046).